Consider the following 114-residue polypeptide: Dihydroneopterin monophosphate aldolase (114 aa).

Residues His15, His26, and His28 each coordinate Zn(2+).

Belongs to the PTPS family. It depends on Zn(2+) as a cofactor.

It catalyses the reaction 7,8-dihydroneopterin 3'-phosphate = glycolaldehyde phosphate + 6-hydroxymethyl-7,8-dihydropterin. In terms of biological role, catalyzes the conversion of 7,8-dihydroneopterin monophosphate (H2NMP) to 6-hydroxymethyl-7,8-dihydropterin (6-HMD). Cannot use 7,8-dihydroneopterin (H2Neo) or 7,8-dihydroneopterin triphosphate (H2NTP) as substrate. The protein is Dihydroneopterin monophosphate aldolase of Pyrococcus furiosus (strain ATCC 43587 / DSM 3638 / JCM 8422 / Vc1).